We begin with the raw amino-acid sequence, 1488 residues long: Chromosome partition protein MukB (1488 aa).

Position 34-41 (34-41 (GGNGAGKS)) interacts with ATP. 3 coiled-coil regions span residues 326-413 (LEAD…QTRA), 444-472 (LDTF…QTAH), and 509-602 (RHLA…RRAP). Residues 666–783 (PGGAEDQRLN…SLPIFGRAAR (118 aa)) form a flexible hinge region. Coiled-coil stretches lie at residues 835-923 (EAEI…AKLE), 977-1116 (EMLS…AKAG), and 1209-1265 (VEAI…LQSV).

This sequence belongs to the SMC family. MukB subfamily. Homodimerization via its hinge domain. Binds to DNA via its C-terminal region. Interacts, and probably forms a ternary complex, with MukE and MukF via its C-terminal region. The complex formation is stimulated by calcium or magnesium. Interacts with tubulin-related protein FtsZ.

It localises to the cytoplasm. Its subcellular location is the nucleoid. Plays a central role in chromosome condensation, segregation and cell cycle progression. Functions as a homodimer, which is essential for chromosome partition. Involved in negative DNA supercoiling in vivo, and by this means organize and compact chromosomes. May achieve or facilitate chromosome segregation by condensation DNA from both sides of a centrally located replisome during cell division. In Salmonella paratyphi C (strain RKS4594), this protein is Chromosome partition protein MukB.